Here is a 497-residue protein sequence, read N- to C-terminus: Glutamate--tRNA ligase (497 aa).

Positions Pro-13 to Met-23 match the 'HIGH' region motif. A 'KMSKS' region motif is present at residues Lys-257–Arg-261. Lys-260 contacts ATP.

It belongs to the class-I aminoacyl-tRNA synthetase family. Glutamate--tRNA ligase type 1 subfamily. As to quaternary structure, monomer.

Its subcellular location is the cytoplasm. The catalysed reaction is tRNA(Glu) + L-glutamate + ATP = L-glutamyl-tRNA(Glu) + AMP + diphosphate. Functionally, catalyzes the attachment of glutamate to tRNA(Glu) in a two-step reaction: glutamate is first activated by ATP to form Glu-AMP and then transferred to the acceptor end of tRNA(Glu). The chain is Glutamate--tRNA ligase from Corynebacterium diphtheriae (strain ATCC 700971 / NCTC 13129 / Biotype gravis).